Here is a 208-residue protein sequence, read N- to C-terminus: UPF0301 protein MAB_4928c (208 aa).

It belongs to the UPF0301 (AlgH) family.

This is UPF0301 protein MAB_4928c from Mycobacteroides abscessus (strain ATCC 19977 / DSM 44196 / CCUG 20993 / CIP 104536 / JCM 13569 / NCTC 13031 / TMC 1543 / L948) (Mycobacterium abscessus).